A 115-amino-acid polypeptide reads, in one-letter code: Protein translation factor SUI1 homolog (115 aa).

The protein belongs to the SUI1 family. As to expression, expressed in all tissues examined.

Probably involved in translation. In Oryza sativa subsp. indica (Rice), this protein is Protein translation factor SUI1 homolog (GOS2).